The sequence spans 317 residues: Transaldolase (317 aa).

The active-site Schiff-base intermediate with substrate is K132.

This sequence belongs to the transaldolase family. Type 1 subfamily. As to quaternary structure, homodimer.

The protein localises to the cytoplasm. The enzyme catalyses D-sedoheptulose 7-phosphate + D-glyceraldehyde 3-phosphate = D-erythrose 4-phosphate + beta-D-fructose 6-phosphate. The protein operates within carbohydrate degradation; pentose phosphate pathway; D-glyceraldehyde 3-phosphate and beta-D-fructose 6-phosphate from D-ribose 5-phosphate and D-xylulose 5-phosphate (non-oxidative stage): step 2/3. Transaldolase is important for the balance of metabolites in the pentose-phosphate pathway. The chain is Transaldolase from Shewanella frigidimarina (strain NCIMB 400).